Consider the following 86-residue polypeptide: Anti-adapter protein IraP (86 aa).

Residues 1 to 36 (MKNLIAELLFKLAQKEEESKELCAQVEALEIIVTAM) adopt a coiled-coil conformation.

This sequence belongs to the IraP family. As to quaternary structure, interacts with RssB.

The protein resides in the cytoplasm. Inhibits RpoS proteolysis by regulating RssB activity, thereby increasing the stability of the sigma stress factor RpoS especially during phosphate starvation, but also in stationary phase and during nitrogen starvation. Its effect on RpoS stability is due to its interaction with RssB, which probably blocks the interaction of RssB with RpoS, and the consequent delivery of the RssB-RpoS complex to the ClpXP protein degradation pathway. The polypeptide is Anti-adapter protein IraP (Shigella sonnei (strain Ss046)).